The primary structure comprises 355 residues: Galactoside 2-alpha-L-fucosyltransferase (355 aa).

Residues 1 to 15 (MRNVKGLFSYMTKTK) lie on the Cytoplasmic side of the membrane. The chain crosses the membrane as a helical; Signal-anchor for type II membrane protein span at residues 16–36 (SFYISIIVIIFIIFIVNRMGP). Residues 37–355 (RNYNYKQIGT…MSRNGSIISK (319 aa)) lie on the Lumenal side of the membrane. N-linked (GlcNAc...) asparagine glycans are attached at residues Asn92, Asn311, and Asn349.

It belongs to the glycosyltransferase 11 family. As to expression, expression is restricted to the 20 intestinal cells in larvae and adult.

It is found in the golgi apparatus. The protein resides in the golgi stack membrane. The protein operates within protein modification; protein glycosylation. Functionally, selectively catalyzes the addition of fucose in alpha 1-2 linkage to Gal-beta-(1-&gt;4)-Xyl-beta-R, Gal-beta-(1-&gt;6)-GlcNAc-R, Gal-beta-(1-&gt;3)-Gal-beta-(1-&gt;4)-Glc and Gal-beta-(1-&gt;3)-Gal-beta-(1-&gt;4)-Xyl-R acceptors but not Gal-beta-(1-&gt;3)-GlcNAc-beta-(1-&gt;3)-Gal-beta-(1-&gt;4)-Glc. Unlike in mammals, unable to fucosylate Gal-beta-(1-&gt;4)-Glc-beta-R. In Caenorhabditis elegans, this protein is Galactoside 2-alpha-L-fucosyltransferase.